Here is a 364-residue protein sequence, read N- to C-terminus: Transcription factor IIIA (364 aa).

9 C2H2-type zinc fingers span residues 38-62 (FICSFPDCSASYNKAWKLDAHLCKH), 68-92 (FVCDYEGCGKAFIRDYHLSRHVLIH), 98-123 (FVCADDGCNQKFNTKSNLKKHIERKH), 130-154 (YVCSYEGCKKAFKKHQQLRTHQCQH), 160-184 (FRCTHEGCGKHFASPSRLKRHGKVH), 187-211 (YLCQKGCSFMGKTWTELLKHMREAH), 215-237 (ITCNVCQRMFKRRDYLKQHMKTH), 244-269 (YRCPRQGCGRTYTTVFNLQSHILSFH), and 275-299 (FVCEHAGCGKTFAMKQSLMRHSVVH). The interval 299-364 (HDPDKKRMKL…PPPAALLTVC (66 aa)) is disordered. The span at 338-352 (SLPNASAESSSSPEA) shows a compositional bias: low complexity.

Its subcellular location is the nucleus. Functionally, involved in ribosomal large subunit biogenesis. Binds the approximately 50 base pairs internal control region (ICR) of 5S ribosomal RNA genes. It is required for their RNA polymerase III-dependent transcription and may also maintain the transcription of other genes. Also binds the transcribed 5S RNA's. The sequence is that of Transcription factor IIIA (Gtf3a) from Mus musculus (Mouse).